Reading from the N-terminus, the 232-residue chain is 2,3,4,5-tetrahydropyridine-2,6-dicarboxylate N-acetyltransferase (232 aa).

It belongs to the transferase hexapeptide repeat family. DapH subfamily.

It catalyses the reaction (S)-2,3,4,5-tetrahydrodipicolinate + acetyl-CoA + H2O = L-2-acetamido-6-oxoheptanedioate + CoA. It functions in the pathway amino-acid biosynthesis; L-lysine biosynthesis via DAP pathway; LL-2,6-diaminopimelate from (S)-tetrahydrodipicolinate (acetylase route): step 1/3. In terms of biological role, catalyzes the transfer of an acetyl group from acetyl-CoA to tetrahydrodipicolinate. In Streptococcus thermophilus (strain CNRZ 1066), this protein is 2,3,4,5-tetrahydropyridine-2,6-dicarboxylate N-acetyltransferase.